A 78-amino-acid chain; its full sequence is Neurogranin (78 aa).

M1 carries the post-translational modification N-acetylmethionine. The IQ domain occupies 26–49; the sequence is ANAAAAKIQASFRGHMARKKIKSG. S36 is subject to Phosphoserine; by PHK and PKC. The interval 38–78 is disordered; it reads RGHMARKKIKSGERGRKGPGPGGPGGAGGARGGAGGGPSGD. One can recognise a Collagen-like domain in the interval 50 to 78; sequence ERGRKGPGPGGPGGAGGARGGAGGGPSGD. The segment covering 55–78 has biased composition (gly residues); that stretch reads GPGPGGPGGAGGARGGAGGGPSGD. R68 is modified (citrulline; partial). R68 bears the Omega-N-methylarginine mark.

It belongs to the neurogranin family. The N-terminus is blocked. Post-translationally, phosphorylated at Ser-36 by PHK and PKC. Phosphorylation prevents interaction with Calmodulin and interrupts several learning- and memory-associated functions. In terms of tissue distribution, is highly enriched in brain. Accumulates postsynaptically in dendritic spines of neostriatal neurons.

In terms of biological role, acts as a 'third messenger' substrate of protein kinase C-mediated molecular cascades during synaptic development and remodeling. Binds to calmodulin in the absence of calcium. The sequence is that of Neurogranin (NRGN) from Bos taurus (Bovine).